Consider the following 177-residue polypeptide: MSEFVTVARPYAKAAFDFAVENQALDRWQSMLAFSAEVARNEQIAELLSGAIAPIELAKTFIAVCGDQLDEAGQNLIRVMAENGRLLVLPEVLEQFIQLRAALESTVDVDVISASTLNEQQLSKIAAAMEKRLSRKVKLNCKIDKSVMAGVVIRAGDMVIDGSIRSRLERLADVLQS.

It belongs to the ATPase delta chain family. As to quaternary structure, F-type ATPases have 2 components, F(1) - the catalytic core - and F(0) - the membrane proton channel. F(1) has five subunits: alpha(3), beta(3), gamma(1), delta(1), epsilon(1). F(0) has three main subunits: a(1), b(2) and c(10-14). The alpha and beta chains form an alternating ring which encloses part of the gamma chain. F(1) is attached to F(0) by a central stalk formed by the gamma and epsilon chains, while a peripheral stalk is formed by the delta and b chains.

The protein localises to the cell inner membrane. F(1)F(0) ATP synthase produces ATP from ADP in the presence of a proton or sodium gradient. F-type ATPases consist of two structural domains, F(1) containing the extramembraneous catalytic core and F(0) containing the membrane proton channel, linked together by a central stalk and a peripheral stalk. During catalysis, ATP synthesis in the catalytic domain of F(1) is coupled via a rotary mechanism of the central stalk subunits to proton translocation. Its function is as follows. This protein is part of the stalk that links CF(0) to CF(1). It either transmits conformational changes from CF(0) to CF(1) or is implicated in proton conduction. The chain is ATP synthase subunit delta from Pectobacterium atrosepticum (strain SCRI 1043 / ATCC BAA-672) (Erwinia carotovora subsp. atroseptica).